We begin with the raw amino-acid sequence, 185 residues long: Ribosome-recycling factor (185 aa).

The protein belongs to the RRF family.

It is found in the cytoplasm. Responsible for the release of ribosomes from messenger RNA at the termination of protein biosynthesis. May increase the efficiency of translation by recycling ribosomes from one round of translation to another. This chain is Ribosome-recycling factor, found in Wolbachia pipientis wMel.